The following is a 557-amino-acid chain: Glucose-6-phosphate isomerase (557 aa).

Glu359 serves as the catalytic Proton donor. Residues His390 and Lys518 contribute to the active site.

Belongs to the GPI family.

The protein localises to the cytoplasm. It catalyses the reaction alpha-D-glucose 6-phosphate = beta-D-fructose 6-phosphate. The protein operates within carbohydrate biosynthesis; gluconeogenesis. It functions in the pathway carbohydrate degradation; glycolysis; D-glyceraldehyde 3-phosphate and glycerone phosphate from D-glucose: step 2/4. In terms of biological role, catalyzes the reversible isomerization of glucose-6-phosphate to fructose-6-phosphate. This Hahella chejuensis (strain KCTC 2396) protein is Glucose-6-phosphate isomerase.